A 152-amino-acid polypeptide reads, in one-letter code: Ribosome maturation factor RimP (152 aa).

This sequence belongs to the RimP family.

It localises to the cytoplasm. In terms of biological role, required for maturation of 30S ribosomal subunits. This chain is Ribosome maturation factor RimP, found in Paraburkholderia phymatum (strain DSM 17167 / CIP 108236 / LMG 21445 / STM815) (Burkholderia phymatum).